The primary structure comprises 465 residues: Argininosuccinate lyase (465 aa).

Belongs to the lyase 1 family. Argininosuccinate lyase subfamily.

It localises to the cytoplasm. It catalyses the reaction 2-(N(omega)-L-arginino)succinate = fumarate + L-arginine. It functions in the pathway amino-acid biosynthesis; L-arginine biosynthesis; L-arginine from L-ornithine and carbamoyl phosphate: step 3/3. This is Argininosuccinate lyase from Methanosphaera stadtmanae (strain ATCC 43021 / DSM 3091 / JCM 11832 / MCB-3).